The following is a 67-amino-acid chain: Large ribosomal subunit protein bL35 (67 aa).

This sequence belongs to the bacterial ribosomal protein bL35 family.

The protein is Large ribosomal subunit protein bL35 of Sinorhizobium fredii (strain NBRC 101917 / NGR234).